The chain runs to 94 residues: Pyrimidine/purine nucleoside phosphorylase (94 aa).

This sequence belongs to the nucleoside phosphorylase PpnP family.

The catalysed reaction is a purine D-ribonucleoside + phosphate = a purine nucleobase + alpha-D-ribose 1-phosphate. It carries out the reaction adenosine + phosphate = alpha-D-ribose 1-phosphate + adenine. The enzyme catalyses cytidine + phosphate = cytosine + alpha-D-ribose 1-phosphate. It catalyses the reaction guanosine + phosphate = alpha-D-ribose 1-phosphate + guanine. The catalysed reaction is inosine + phosphate = alpha-D-ribose 1-phosphate + hypoxanthine. It carries out the reaction thymidine + phosphate = 2-deoxy-alpha-D-ribose 1-phosphate + thymine. The enzyme catalyses uridine + phosphate = alpha-D-ribose 1-phosphate + uracil. It catalyses the reaction xanthosine + phosphate = alpha-D-ribose 1-phosphate + xanthine. Its function is as follows. Catalyzes the phosphorolysis of diverse nucleosides, yielding D-ribose 1-phosphate and the respective free bases. Can use uridine, adenosine, guanosine, cytidine, thymidine, inosine and xanthosine as substrates. Also catalyzes the reverse reactions. The chain is Pyrimidine/purine nucleoside phosphorylase from Teredinibacter turnerae (strain ATCC 39867 / T7901).